The sequence spans 180 residues: 2-oxoglutarate dehydrogenase, mitochondrial (180 aa).

K14 is modified (N6-succinyllysine). S40 carries the post-translational modification Phosphoserine. A thiamine diphosphate-binding site is contributed by R64.

It belongs to the alpha-ketoglutarate dehydrogenase family. In terms of assembly, homodimer. The 2-oxoglutarate dehydrogenase complex is composed of OGDH (2-oxoglutarate dehydrogenase; E1), DLST (dihydrolipoamide succinyltransferase; E2) and DLD (dihydrolipoamide dehydrogenase; E3). It contains multiple copies of the three enzymatic components (E1, E2 and E3). In the nucleus, the 2-oxoglutarate dehydrogenase complex associates with KAT2A. Interacts with ABHD11; this interaction maintains the functional lipoylation of the 2-oxoglutarate dehydrogenase complex. Thiamine diphosphate is required as a cofactor. Requires Mg(2+) as cofactor.

The protein resides in the mitochondrion matrix. It localises to the nucleus. It catalyses the reaction N(6)-[(R)-lipoyl]-L-lysyl-[protein] + 2-oxoglutarate + H(+) = N(6)-[(R)-S(8)-succinyldihydrolipoyl]-L-lysyl-[protein] + CO2. With respect to regulation, calcium ions and ADP stimulate, whereas ATP and NADH reduce catalytic activity. In terms of biological role, 2-oxoglutarate dehydrogenase (E1) component of the 2-oxoglutarate dehydrogenase complex (OGDHC), which mediates the decarboxylation of alpha-ketoglutarate. The 2-oxoglutarate dehydrogenase complex catalyzes the overall conversion of 2-oxoglutarate to succinyl-CoA and CO(2). The 2-oxoglutarate dehydrogenase complex is mainly active in the mitochondrion. A fraction of the 2-oxoglutarate dehydrogenase complex also localizes in the nucleus and is required for lysine succinylation of histones: associates with KAT2A on chromatin and provides succinyl-CoA to histone succinyltransferase KAT2A. The polypeptide is 2-oxoglutarate dehydrogenase, mitochondrial (Mesocricetus auratus (Golden hamster)).